The sequence spans 422 residues: S-adenosylmethionine synthase (422 aa).

His15 is an ATP binding site. Residue Asp17 coordinates Mg(2+). Glu43 provides a ligand contact to K(+). L-methionine contacts are provided by Glu56 and Gln99. Residues 99-109 form a flexible loop region; that stretch reads QSPDISRGVTE. Residues 166 to 168, 232 to 233, Asp241, 247 to 248, Ala264, and Lys268 each bind ATP; these read DGK, RF, and RK. Asp241 serves as a coordination point for L-methionine. Lys272 serves as a coordination point for L-methionine. A disordered region spans residues 390 to 422; sequence AVPATTNGAGSKNGSGSKKEPKRKGKKETGAQA.

The protein belongs to the AdoMet synthase family. As to quaternary structure, homotetramer; dimer of dimers. The cofactor is Mg(2+). Requires K(+) as cofactor.

It localises to the cytoplasm. It carries out the reaction L-methionine + ATP + H2O = S-adenosyl-L-methionine + phosphate + diphosphate. The protein operates within amino-acid biosynthesis; S-adenosyl-L-methionine biosynthesis; S-adenosyl-L-methionine from L-methionine: step 1/1. In terms of biological role, catalyzes the formation of S-adenosylmethionine (AdoMet) from methionine and ATP. The overall synthetic reaction is composed of two sequential steps, AdoMet formation and the subsequent tripolyphosphate hydrolysis which occurs prior to release of AdoMet from the enzyme. In Sorangium cellulosum (strain So ce56) (Polyangium cellulosum (strain So ce56)), this protein is S-adenosylmethionine synthase.